We begin with the raw amino-acid sequence, 203 residues long: Inosine triphosphate pyrophosphatase (203 aa).

Residue 10 to 15 (TGNQNK) participates in ITP binding. E40 serves as a coordination point for Mg(2+). ITP is bound by residues K52, 68 to 69 (DT), K85, 145 to 148 (FGWD), K168, and 173 to 174 (HR).

The protein belongs to the HAM1 NTPase family. As to quaternary structure, homodimer. Requires Mg(2+) as cofactor. Mn(2+) is required as a cofactor.

It is found in the cytoplasm. It carries out the reaction ITP + H2O = IMP + diphosphate + H(+). It catalyses the reaction dITP + H2O = dIMP + diphosphate + H(+). The catalysed reaction is XTP + H2O = XMP + diphosphate + H(+). Pyrophosphatase that hydrolyzes non-canonical purine nucleotides such as inosine triphosphate (ITP), deoxyinosine triphosphate (dITP) or xanthosine 5'-triphosphate (XTP) to their respective monophosphate derivatives. The enzyme does not distinguish between the deoxy- and ribose forms. Probably excludes non-canonical purines from RNA and DNA precursor pools, thus preventing their incorporation into RNA and DNA and avoiding chromosomal lesions. In Nematostella vectensis (Starlet sea anemone), this protein is Inosine triphosphate pyrophosphatase.